A 231-amino-acid polypeptide reads, in one-letter code: 7-cyano-7-deazaguanine synthase (231 aa).

ATP is bound at residue 8-18 (FSGGQDSTTCL). Residues Cys-188, Cys-197, Cys-200, and Cys-203 each contribute to the Zn(2+) site.

Belongs to the QueC family. Requires Zn(2+) as cofactor.

It carries out the reaction 7-carboxy-7-deazaguanine + NH4(+) + ATP = 7-cyano-7-deazaguanine + ADP + phosphate + H2O + H(+). The protein operates within purine metabolism; 7-cyano-7-deazaguanine biosynthesis. Functionally, catalyzes the ATP-dependent conversion of 7-carboxy-7-deazaguanine (CDG) to 7-cyano-7-deazaguanine (preQ(0)). The protein is 7-cyano-7-deazaguanine synthase of Escherichia coli (strain SMS-3-5 / SECEC).